An 83-amino-acid polypeptide reads, in one-letter code: Small ribosomal subunit protein bS20 (83 aa).

The interval 1-25 (MPNIKSAIKRVNTTHTAEERNISQK) is disordered. Residues 16 to 25 (TAEERNISQK) are compositionally biased toward basic and acidic residues.

This sequence belongs to the bacterial ribosomal protein bS20 family.

Functionally, binds directly to 16S ribosomal RNA. This is Small ribosomal subunit protein bS20 from Staphylococcus saprophyticus subsp. saprophyticus (strain ATCC 15305 / DSM 20229 / NCIMB 8711 / NCTC 7292 / S-41).